Consider the following 409-residue polypeptide: Histidine--tRNA ligase (409 aa).

This sequence belongs to the class-II aminoacyl-tRNA synthetase family.

The protein resides in the cytoplasm. The enzyme catalyses tRNA(His) + L-histidine + ATP = L-histidyl-tRNA(His) + AMP + diphosphate + H(+). In Archaeoglobus fulgidus (strain ATCC 49558 / DSM 4304 / JCM 9628 / NBRC 100126 / VC-16), this protein is Histidine--tRNA ligase (hisS).